A 136-amino-acid polypeptide reads, in one-letter code: DNA-directed RNA polymerase subunit omega (136 aa).

The interval Glu81–Asp136 is disordered. The span at Glu83–Pro99 shows a compositional bias: low complexity. A compositionally biased stretch (basic and acidic residues) spans Gln109–Arg120.

Belongs to the RNA polymerase subunit omega family. The RNAP catalytic core consists of 2 alpha, 1 beta, 1 beta' and 1 omega subunit. When a sigma factor is associated with the core the holoenzyme is formed, which can initiate transcription.

The catalysed reaction is RNA(n) + a ribonucleoside 5'-triphosphate = RNA(n+1) + diphosphate. Functionally, promotes RNA polymerase assembly. Latches the N- and C-terminal regions of the beta' subunit thereby facilitating its interaction with the beta and alpha subunits. The polypeptide is DNA-directed RNA polymerase subunit omega (Methylobacterium nodulans (strain LMG 21967 / CNCM I-2342 / ORS 2060)).